A 541-amino-acid chain; its full sequence is uncharacterized protein (541 aa).

A run of 6 helical transmembrane segments spans residues 57–77 (LVVTANLLGIGVALLLVTIAI), 90–110 (LTFGVVPGYVLLALALGSYAL), 144–164 (VGHLMFWGVGTALLTTLYGLI), 167–187 (AFIPRFLFAVSFCGVLVATAT), 221–241 (MVVWLLGSGVPVVGIALMAMF), and 257–277 (VLIISMVTLVFGFILMWILAW). The HAMP domain occupies 278–329 (LTATPVRVVRAALRRVERGELRTNLVVFDGTELGELQRGFNAMVAGLRERER). A Guanylate cyclase domain is found at 361–485 (AVVFIDIVGS…EPVNEAARLC (125 aa)).

This sequence belongs to the adenylyl cyclase class-3 family.

Its subcellular location is the cell membrane. This is an uncharacterized protein from Mycobacterium tuberculosis (strain CDC 1551 / Oshkosh).